Reading from the N-terminus, the 473-residue chain is Catalase easC (473 aa).

Positions 1 to 15 (MASEVSVASSGSEHS) are enriched in low complexity. A disordered region spans residues 1 to 31 (MASEVSVASSGSEHSGAQKCPFQDPGLSSMD). Histidine 54 is an active-site residue. Residue tyrosine 344 participates in heme binding. Residues 352-389 (LGPNNLDLPANRTKKLADGSRPEKAEMAPQKVPSQEHA) form a disordered region. Residues 366–377 (KLADGSRPEKAE) show a composition bias toward basic and acidic residues.

The protein belongs to the catalase family. Requires heme as cofactor.

It participates in alkaloid biosynthesis; ergot alkaloid biosynthesis. Its function is as follows. Catalase; part of the gene cluster that mediates the biosynthesis of fungal ergot alkaloid. DmaW catalyzes the first step of ergot alkaloid biosynthesis by condensing dimethylallyl diphosphate (DMAP) and tryptophan to form 4-dimethylallyl-L-tryptophan. The second step is catalyzed by the methyltransferase easF that methylates 4-dimethylallyl-L-tryptophan in the presence of S-adenosyl-L-methionine, resulting in the formation of 4-dimethylallyl-L-abrine. The catalase easC and the FAD-dependent oxidoreductase easE then transform 4-dimethylallyl-L-abrine to chanoclavine-I which is further oxidized by easD in the presence of NAD(+), resulting in the formation of chanoclavine-I aldehyde. Agroclavine dehydrogenase easG then mediates the conversion of chanoclavine-I aldehyde to agroclavine via a non-enzymatic adduct reaction: the substrate is an iminium intermediate that is formed spontaneously from chanoclavine-I aldehyde in the presence of glutathione. The presence of easA is not required to complete this reaction. Further conversion of agroclavine to paspalic acid is a two-step process involving oxidation of agroclavine to elymoclavine and of elymoclavine to paspalic acid, the second step being performed by the elymoclavine oxidase cloA. Paspalic acid is then further converted to D-lysergic acid. Ergopeptines are assembled from D-lysergic acid and three different amino acids by the D-lysergyl-peptide-synthetases composed each of a monomudular and a trimodular nonribosomal peptide synthetase subunit. LpsB and lpsC encode the monomodular subunits responsible for D-lysergic acid activation and incorporation into the ergopeptine backbone. LpsA1 and A2 subunits encode the trimodular nonribosomal peptide synthetase assembling the tripeptide portion of ergopeptines. LpsA1 is responsible for formation of the major ergopeptine, ergotamine, and lpsA2 for alpha-ergocryptine, the minor ergopeptine of the total alkaloid mixture elaborated by C.purpurea. D-lysergyl-tripeptides are assembled by the nonribosomal peptide synthetases and released as N-(D-lysergyl-aminoacyl)-lactams. Cyclolization of the D-lysergyl-tripeptides is performed by the Fe(2+)/2-ketoglutarate-dependent dioxygenase easH which introduces a hydroxyl group into N-(D-lysergyl-aminoacyl)-lactam at alpha-C of the aminoacyl residue followed by spontaneous condensation with the terminal lactam carbonyl group. The chain is Catalase easC from Claviceps purpurea (strain 20.1) (Ergot fungus).